The sequence spans 230 residues: Cysteine S-methyltransferase OspZ (230 aa).

Residues 49-52 (GITR) form an interaction with host proteins TAB2, TAB3 and ZRANB3 region. The S-adenosyl-L-methionine site is built by A92, S98, R107, Q111, Y204, and E208.

The protein belongs to the NleE/OspZ family. Monomer.

Its subcellular location is the secreted. It localises to the host cytoplasm. The protein resides in the host nucleus. It carries out the reaction L-cysteinyl-[protein] + S-adenosyl-L-methionine = S-methyl-L-cysteinyl-[protein] + S-adenosyl-L-homocysteine + H(+). Cysteine methyltransferase effector that inhibits host cell NF-kappa-B activation by preventing nuclear translocation of host protein RELA/p65. Acts by mediating cysteine methylation of host proteins TAB2 and TAB3: methylation of a conserved cysteine residue of the RanBP2-type zinc finger (NZF) of TAB2 and TAB3 disrupts zinc-binding, thereby inactivating the ubiquitin chain-binding activity of TAB2 and TAB3, leading to NF-kappa-B inactivation. Also mediates cysteine methylation of host protein ZRANB3, inactivating its ability to bind ubiquitin chains. The polypeptide is Cysteine S-methyltransferase OspZ (Shigella flexneri).